A 586-amino-acid polypeptide reads, in one-letter code: Aspartate--tRNA(Asp/Asn) ligase (586 aa).

E175 is an L-aspartate binding site. Positions 199–202 (QIFK) are aspartate. Residue R221 coordinates L-aspartate. ATP is bound by residues 221 to 223 (RDE) and Q230. An L-aspartate-binding site is contributed by H448. Position 482 (E482) interacts with ATP. R489 lines the L-aspartate pocket. 534–537 (GVDR) is a binding site for ATP.

It belongs to the class-II aminoacyl-tRNA synthetase family. Type 1 subfamily. As to quaternary structure, homodimer.

Its subcellular location is the cytoplasm. The enzyme catalyses tRNA(Asx) + L-aspartate + ATP = L-aspartyl-tRNA(Asx) + AMP + diphosphate. Aspartyl-tRNA synthetase with relaxed tRNA specificity since it is able to aspartylate not only its cognate tRNA(Asp) but also tRNA(Asn). Reaction proceeds in two steps: L-aspartate is first activated by ATP to form Asp-AMP and then transferred to the acceptor end of tRNA(Asp/Asn). The polypeptide is Aspartate--tRNA(Asp/Asn) ligase (Syntrophomonas wolfei subsp. wolfei (strain DSM 2245B / Goettingen)).